The primary structure comprises 88 residues: Small ribosomal subunit protein bS16c (88 aa).

This sequence belongs to the bacterial ribosomal protein bS16 family.

It is found in the plastid. The protein localises to the chloroplast. This chain is Small ribosomal subunit protein bS16c, found in Oenothera elata subsp. hookeri (Hooker's evening primrose).